The following is a 341-amino-acid chain: N-acetyl-gamma-glutamyl-phosphate reductase (341 aa).

Cys-145 is an active-site residue.

This sequence belongs to the NAGSA dehydrogenase family. Type 1 subfamily.

Its subcellular location is the cytoplasm. The catalysed reaction is N-acetyl-L-glutamate 5-semialdehyde + phosphate + NADP(+) = N-acetyl-L-glutamyl 5-phosphate + NADPH + H(+). The protein operates within amino-acid biosynthesis; L-arginine biosynthesis; N(2)-acetyl-L-ornithine from L-glutamate: step 3/4. Its function is as follows. Catalyzes the NADPH-dependent reduction of N-acetyl-5-glutamyl phosphate to yield N-acetyl-L-glutamate 5-semialdehyde. The chain is N-acetyl-gamma-glutamyl-phosphate reductase from Streptomyces clavuligerus.